The primary structure comprises 1647 residues: Cortactin-binding protein 2 (1647 aa).

Disordered stretches follow at residues 1–27 (MATDGASCEPDASRAPEEAAGATAEAA), 202–222 (EKKKTNELEEELSAEKRRSTE), 318–427 (HVKK…QPGL), 440–468 (GNANDPDQNGNTTQSPPSRDVSPTSRDNL), and 482–604 (LSRF…PSID). The stretch at 120–276 (KMQERMATQL…EQLKRGSDSK (157 aa)) forms a coiled coil. Over residues 362 to 372 (SSAPSLPPASA) the composition is skewed to low complexity. Residues 379–388 (GPSTGSTADL) show a composition bias toward polar residues. Over residues 389 to 411 (PSSTAPAPGSAAQSPVAAALGPA) the composition is skewed to low complexity. Polar residues predominate over residues 440–466 (GNANDPDQNGNTTQSPPSRDVSPTSRD). Arg-484 is subject to Asymmetric dimethylarginine. Positions 488-509 (PAVGAAPRPGAPPTGDAGAYPP) are enriched in low complexity. Polar residues predominate over residues 569–579 (TVASPPSSLPQ). ANK repeat units follow at residues 695–725 (GRPTLLQQAAAQGNVTLLSMLLNEEGLDINY), 729–758 (DGHSALYSAAKNGHTDCVRLLLNAEAQVNA), 762–791 (NGFTPLCAAAAQGHFECVELLIAYDANINH), 795–824 (GGQTPLYLACKNGNKECIKLLLEAGTDRSV), and 828–857 (DGWTPVHAAVDTGNVDSLKLLMYHRAPAHG). Positions 856–886 (HGNSLNEEEPESDVSDLDDGEESSEGESKPV) are disordered. A compositionally biased stretch (acidic residues) spans 861-880 (NEEEPESDVSDLDDGEESSE). The ANK 6 repeat unit spans residues 898–928 (EGWTAAHIAASKGFKNCLEILCRHRGLEPER). A disordered region spans residues 1436–1467 (ENGAWRKVNTSPRRKSGRFSSPTWNKPDLSNE). Ser-1509 carries the post-translational modification Phosphoserine. The segment at 1542-1647 (RTFDSSGNNP…HKNEQTHRKT (106 aa)) is disordered. 2 stretches are compositionally biased toward polar residues: residues 1544 to 1559 (FDSSGNNPAFSATVNN) and 1567 to 1584 (KEVSPLSSHQTTECSNNK). The segment covering 1609-1623 (SQNTKRSSSSSNTRQ) has biased composition (low complexity). The segment covering 1630 to 1647 (SKEENWNLHKNEQTHRKT) has biased composition (basic and acidic residues).

In terms of assembly, interacts with CTTN/cortactin SH3 domain. Interacts with STRN, STRN4/zinedin and MOB4/phocein; this interactions mediate the association with the STRIPAK core complex and may regulate dendritic spine distribution of the STRIPAK complex in hippocampal neurons. Activation of glutamate receptors weakens the interaction with STRN and STRN4.

The protein resides in the cytoplasm. The protein localises to the cell cortex. It is found in the cell projection. Its subcellular location is the dendritic spine. Its function is as follows. Regulates the dendritic spine distribution of CTTN/cortactin in hippocampal neurons, and thus controls dendritic spinogenesis and dendritic spine maintenance. Associates with the striatin-interacting phosphatase and kinase (STRIPAK) core complex to regulate dendritic spine distribution of the STRIPAK complex in hippocampal neurons. The sequence is that of Cortactin-binding protein 2 (CTTNBP2) from Microcebus murinus (Gray mouse lemur).